A 260-amino-acid polypeptide reads, in one-letter code: Purine nucleoside phosphorylase PD_1754 (260 aa).

Zn(2+) contacts are provided by histidine 79, cysteine 120, and histidine 137.

Belongs to the purine nucleoside phosphorylase YfiH/LACC1 family. Homodimer. Cu(2+) serves as cofactor. The cofactor is Zn(2+).

It carries out the reaction adenosine + phosphate = alpha-D-ribose 1-phosphate + adenine. It catalyses the reaction S-methyl-5'-thioadenosine + phosphate = 5-(methylsulfanyl)-alpha-D-ribose 1-phosphate + adenine. The catalysed reaction is inosine + phosphate = alpha-D-ribose 1-phosphate + hypoxanthine. The enzyme catalyses adenosine + H2O + H(+) = inosine + NH4(+). Purine nucleoside enzyme that catalyzes the phosphorolysis of adenosine and inosine nucleosides, yielding D-ribose 1-phosphate and the respective free bases, adenine and hypoxanthine. Also catalyzes the phosphorolysis of S-methyl-5'-thioadenosine into adenine and S-methyl-5-thio-alpha-D-ribose 1-phosphate. Also has adenosine deaminase activity. The sequence is that of Purine nucleoside phosphorylase PD_1754 from Xylella fastidiosa (strain Temecula1 / ATCC 700964).